Here is a 669-residue protein sequence, read N- to C-terminus: MENPSALPIKLQPSNLRPIAYRILSKKHGLNIQTDALKLLTDAVSYKFGFDWKSTQSQQFLEEIAKIWKKQDRGIFIDGPGLKQVIKELSDRNTNQISTRNGSADNLAKKAERSDTLVDNDAENEPVNNAENTLNWQDYFKVINPDEQPNYKYDKHRKQLSFIPSTNAKRLANNLNSNVDYFNNRYHLISDRLSRNENFQKPSFSSISSISKSLSHNNKTNEITLIKNVLGRDGSKFILFGLLSKNANDDFILEDSTDHIELNLTQAYKTEGSFYCPGMFVIVEGIYSASGGSMSNANVIGGCFHVSNIGHPPAERRELSMENYGNLDFMGINRDNDTNNNDNHILRVNKSLKKKLVSLEKTLVNHKLIILGSDCFLDDLKILDGIKKLFGKIESSLIDDETNQPLVIVLIGSFTSNPLTPTNSSVANVSNTENYKSNFDNLSNILSNFPNIVQKVKIALIPGINDPWQSSHSLGGSNLNAFPQRSIPKIFTNRLERLLPKGNLIAGWNPLRINYLSQEIVLMKDDIINKFKRNDIIFSNDLELEQLKLQKDKNDDGLIHATDINTKEPHISPKIKQARKLVKTILDQGNLQPFLKDIRIINTNFDYSLRIEPLPTILILNDATFPTFEVTYNGCKVINTGKLVGNNRKLSFVEYFPSGKKFEFKEVYF.

A disordered region spans residues 96–115; it reads QISTRNGSADNLAKKAERSD.

Belongs to the DNA polymerase epsilon subunit B family. In terms of assembly, heterotetramer. Consists of four subunits: POL2, DPB2, DPB3 and DPB4.

It is found in the nucleus. As accessory component of the DNA polymerase epsilon (DNA polymerase II) participates in chromosomal DNA replication. This chain is DNA polymerase epsilon subunit B (DPB2), found in Debaryomyces hansenii (strain ATCC 36239 / CBS 767 / BCRC 21394 / JCM 1990 / NBRC 0083 / IGC 2968) (Yeast).